The sequence spans 266 residues: Lectin 7 (266 aa).

Residues 1 to 27 (MAINTSRTQILFITIISFLILAQNVNS) form the signal peptide. N-linked (GlcNAc...) asparagine glycans are attached at residues asparagine 121, asparagine 205, and asparagine 219.

Belongs to the leguminous lectin family.

Functionally, may be involved in arbuscular mycorrhizal (AM) symbiosis with AM fungi. The polypeptide is Lectin 7 (Medicago truncatula (Barrel medic)).